A 202-amino-acid chain; its full sequence is Sterile alpha motif domain-containing protein 10 (202 aa).

The interval 1 to 22 (MFTELRSKLSPPRARAGAVRPG) is disordered. The region spanning 118-184 (WSQQDVCKWL…LQQVLHLQVR (67 aa)) is the SAM domain.

In Mus musculus (Mouse), this protein is Sterile alpha motif domain-containing protein 10.